Consider the following 369-residue polypeptide: C-C chemokine receptor type 9 (369 aa).

Residues 1-48 are Extracellular-facing; that stretch reads MMPTELTSLIPGMFDDFSYDSTASTDDYMNLNFSSFFCKKNNVRQFAS. A glycan (N-linked (GlcNAc...) asparagine) is linked at Asn-32. 2 cysteine pairs are disulfide-bonded: Cys-38/Cys-289 and Cys-119/Cys-198. The helical transmembrane segment at 49 to 74 threads the bilayer; sequence HFLPPLYWLVFIVGTLGNSLVILVYW. The Cytoplasmic portion of the chain corresponds to 75 to 85; it reads YCTRVKTMTDM. The helical transmembrane segment at 86-109 threads the bilayer; sequence FLLNLAIADLLFLATLPFWAIAAA. At 110–120 the chain is on the extracellular side; that stretch reads GQWMFQTFMCK. A helical membrane pass occupies residues 121 to 150; that stretch reads VVNSMYKMNFYSCVLLIMCISVDRYIAIVQ. The Cytoplasmic segment spans residues 151-159; the sequence is AMKAQVWRQ. A helical transmembrane segment spans residues 160-185; sequence KRLLYSKMVCITIWVMAAVLCTPEIL. Over 186–208 the chain is Extracellular; that stretch reads YSQVSGESGIATCTMVYPKDKNA. Residues 209–243 form a helical membrane-spanning segment; the sequence is KLKSAVLILKVTLGFFLPFMVMAFCYTIIIHTLVQ. Over 244–248 the chain is Cytoplasmic; the sequence is AKKSS. A helical transmembrane segment spans residues 249 to 283; it reads KHKALKVTITVLTVFIMSQFPYNSILVVQAVDAYA. Topologically, residues 284–290 are extracellular; it reads MFISNCT. A helical membrane pass occupies residues 291-321; it reads ISTNIDICFQVTQTIAFFHSCLNPVLYVFVG. Residues 322–369 are Cytoplasmic-facing; the sequence is ERFRRDLVKTLKNLGCISQAQWVSFTRREGSLKLSSMLLETTSGALSL.

The protein belongs to the G-protein coupled receptor 1 family. As to expression, highly expressed in the thymus and low in lymph nodes and spleen.

The protein resides in the cell membrane. Functionally, receptor for chemokine SCYA25/TECK. Subsequently transduces a signal by increasing the intracellular calcium ions level. This Mus musculus (Mouse) protein is C-C chemokine receptor type 9 (Ccr9).